Consider the following 128-residue polypeptide: RutC family protein BUsg_359 (128 aa).

It belongs to the RutC family.

The sequence is that of RutC family protein BUsg_359 from Buchnera aphidicola subsp. Schizaphis graminum (strain Sg).